A 335-amino-acid polypeptide reads, in one-letter code: Cytoplasmic envelopment protein 2 (335 aa).

The protein belongs to the herpesviridae cytoplasmic envelopment protein 2 family. As to quaternary structure, interacts with cytoplasmic envelopment protein 3 and with the capsid.

It localises to the virion tegument. Its subcellular location is the host cytoplasm. It is found in the host nucleus. Its function is as follows. Plays a critical role in cytoplasmic virus egress. Participates in the final step of tegumentation and envelope acquisition within the host cytoplasm by directly interacting with the capsid. Upon virion binding to target cell, a signaling cascade is triggered to disrupt the interaction with the capsid, thereby preparing capsid uncoating. This Connochaetes taurinus (Blue wildebeest) protein is Cytoplasmic envelopment protein 2 (33).